The following is a 197-amino-acid chain: Putative carbonic anhydrase YvdA (197 aa).

The Zn(2+) site is built by Cys-41, Asp-43, His-99, and Cys-102.

It belongs to the beta-class carbonic anhydrase family. It depends on Zn(2+) as a cofactor.

It carries out the reaction hydrogencarbonate + H(+) = CO2 + H2O. Reversible hydration of carbon dioxide. This is Putative carbonic anhydrase YvdA (yvdA) from Bacillus subtilis (strain 168).